The primary structure comprises 251 residues: Putative glutathione-independent glyoxalase hsp3105 (251 aa).

This sequence belongs to the peptidase C56 family. HSP31-like subfamily.

Its subcellular location is the cytoplasm. The protein localises to the nucleus. It carries out the reaction methylglyoxal + H2O = (R)-lactate + H(+). Its function is as follows. May catalyze the conversion of methylglyoxal (MG) to D-lactate in a single glutathione (GSH)-independent step. May play a role in detoxifying endogenously produced glyoxals. Involved in protection against reactive oxygen species (ROS). The protein is Putative glutathione-independent glyoxalase hsp3105 of Schizosaccharomyces pombe (strain 972 / ATCC 24843) (Fission yeast).